A 66-amino-acid polypeptide reads, in one-letter code: Large ribosomal subunit protein bL35 (66 aa).

Belongs to the bacterial ribosomal protein bL35 family.

The chain is Large ribosomal subunit protein bL35 from Parvibaculum lavamentivorans (strain DS-1 / DSM 13023 / NCIMB 13966).